A 97-amino-acid polypeptide reads, in one-letter code: MPAKESPFRVNLKILPSAQRNELTGYENGLLKIKIAAQPEKGKANKALVDYLSELLDTPKSEIEICRGLSGRNKVVAFYSLSQADFEAKISAILRGS.

The protein belongs to the UPF0235 family.

The protein is UPF0235 protein DET1292 of Dehalococcoides mccartyi (strain ATCC BAA-2266 / KCTC 15142 / 195) (Dehalococcoides ethenogenes (strain 195)).